A 763-amino-acid polypeptide reads, in one-letter code: Phosphoglycerol transferase I (763 aa).

4 consecutive transmembrane segments (helical) span residues 1–21 (MSELLSIALFLASVLIYAWKA), 26–46 (WWFAAILAVLGLFVVLNITLY), 77–97 (ILPGAGIVLALAAVFSALGWV), and 108–128 (FGYSLLALLLALGSVDASPAF).

Belongs to the OpgB family.

Its subcellular location is the cell inner membrane. It carries out the reaction a phosphatidylglycerol + a membrane-derived-oligosaccharide D-glucose = a 1,2-diacyl-sn-glycerol + a membrane-derived-oligosaccharide 6-(glycerophospho)-D-glucose.. It participates in glycan metabolism; osmoregulated periplasmic glucan (OPG) biosynthesis. Its function is as follows. Transfers a phosphoglycerol residue from phosphatidylglycerol to the membrane-bound nascent glucan backbones. In Citrobacter koseri (strain ATCC BAA-895 / CDC 4225-83 / SGSC4696), this protein is Phosphoglycerol transferase I.